We begin with the raw amino-acid sequence, 1162 residues long: Carbamoyl phosphate synthase large chain (1162 aa).

Residues 1-456 (MPKRTDIKSI…SLQKALRGLE (456 aa)) are carboxyphosphate synthetic domain. ATP contacts are provided by arginine 129, arginine 222, glycine 228, glycine 229, glutamate 261, valine 263, glutamate 268, glycine 294, valine 295, histidine 296, glutamine 338, and glutamate 352. An ATP-grasp 1 domain is found at 186–381 (ETEWQLGEVE…IAKVAAKLAV (196 aa)). 3 residues coordinate Mg(2+): glutamine 338, glutamate 352, and asparagine 354. Positions 338, 352, and 354 each coordinate Mn(2+). The segment at 457-613 (TGLTGFDEIA…PFVGQPRSEA (157 aa)) is oligomerization domain. The tract at residues 614–1025 (EVSDRKKVVI…AFAKAQLGAG (412 aa)) is carbamoyl phosphate synthetic domain. One can recognise an ATP-grasp 2 domain in the interval 742–954 (QKLLIKLDLN…IAKVAARIMA (213 aa)). Arginine 778, threonine 838, leucine 840, glutamate 845, glycine 870, isoleucine 871, histidine 872, serine 873, glutamine 913, and glutamate 925 together coordinate ATP. Mg(2+) is bound by residues glutamine 913, glutamate 925, and asparagine 927. Mn(2+) is bound by residues glutamine 913, glutamate 925, and asparagine 927. Residues 1026-1162 (VELPREGTVF…VRPLQDYFRS (137 aa)) form the MGS-like domain. The tract at residues 1026–1162 (VELPREGTVF…VRPLQDYFRS (137 aa)) is allosteric domain.

Belongs to the CarB family. Composed of two chains; the small (or glutamine) chain promotes the hydrolysis of glutamine to ammonia, which is used by the large (or ammonia) chain to synthesize carbamoyl phosphate. Tetramer of heterodimers (alpha,beta)4. Requires Mg(2+) as cofactor. It depends on Mn(2+) as a cofactor.

The enzyme catalyses hydrogencarbonate + L-glutamine + 2 ATP + H2O = carbamoyl phosphate + L-glutamate + 2 ADP + phosphate + 2 H(+). The catalysed reaction is hydrogencarbonate + NH4(+) + 2 ATP = carbamoyl phosphate + 2 ADP + phosphate + 2 H(+). It participates in amino-acid biosynthesis; L-arginine biosynthesis; carbamoyl phosphate from bicarbonate: step 1/1. It functions in the pathway pyrimidine metabolism; UMP biosynthesis via de novo pathway; (S)-dihydroorotate from bicarbonate: step 1/3. Functionally, large subunit of the glutamine-dependent carbamoyl phosphate synthetase (CPSase). CPSase catalyzes the formation of carbamoyl phosphate from the ammonia moiety of glutamine, carbonate, and phosphate donated by ATP, constituting the first step of 2 biosynthetic pathways, one leading to arginine and/or urea and the other to pyrimidine nucleotides. The large subunit (synthetase) binds the substrates ammonia (free or transferred from glutamine from the small subunit), hydrogencarbonate and ATP and carries out an ATP-coupled ligase reaction, activating hydrogencarbonate by forming carboxy phosphate which reacts with ammonia to form carbamoyl phosphate. The chain is Carbamoyl phosphate synthase large chain from Brucella suis biovar 1 (strain 1330).